We begin with the raw amino-acid sequence, 366 residues long: tRNA 2-selenouridine synthase (366 aa).

One can recognise a Rhodanese domain in the interval 12–135 (FLNDVPMMDA…MRTFLLDTLH (124 aa)). Catalysis depends on C95, which acts as the S-selanylcysteine intermediate.

It belongs to the SelU family. In terms of assembly, monomer.

It carries out the reaction 5-methylaminomethyl-2-thiouridine(34) in tRNA + selenophosphate + (2E)-geranyl diphosphate + H2O + H(+) = 5-methylaminomethyl-2-selenouridine(34) in tRNA + (2E)-thiogeraniol + phosphate + diphosphate. The enzyme catalyses 5-methylaminomethyl-2-thiouridine(34) in tRNA + (2E)-geranyl diphosphate = 5-methylaminomethyl-S-(2E)-geranyl-thiouridine(34) in tRNA + diphosphate. The catalysed reaction is 5-methylaminomethyl-S-(2E)-geranyl-thiouridine(34) in tRNA + selenophosphate + H(+) = 5-methylaminomethyl-2-(Se-phospho)selenouridine(34) in tRNA + (2E)-thiogeraniol. It catalyses the reaction 5-methylaminomethyl-2-(Se-phospho)selenouridine(34) in tRNA + H2O = 5-methylaminomethyl-2-selenouridine(34) in tRNA + phosphate. In terms of biological role, involved in the post-transcriptional modification of the uridine at the wobble position (U34) of tRNA(Lys), tRNA(Glu) and tRNA(Gln). Catalyzes the conversion of 2-thiouridine (S2U-RNA) to 2-selenouridine (Se2U-RNA). Acts in a two-step process involving geranylation of 2-thiouridine (S2U) to S-geranyl-2-thiouridine (geS2U) and subsequent selenation of the latter derivative to 2-selenouridine (Se2U) in the tRNA chain. In Pseudomonas syringae pv. syringae (strain B728a), this protein is tRNA 2-selenouridine synthase.